A 144-amino-acid polypeptide reads, in one-letter code: Large ribosomal subunit protein uL15 (144 aa).

The segment at 1 to 49 is disordered; that stretch reads MRLNTLSPAAGAKSAAKRVGRGIGSGLGKTAGRGHKGQKSRSGGGVRVG. Positions 21–31 are enriched in gly residues; it reads RGIGSGLGKTA.

It belongs to the universal ribosomal protein uL15 family. In terms of assembly, part of the 50S ribosomal subunit.

Functionally, binds to the 23S rRNA. In Shewanella piezotolerans (strain WP3 / JCM 13877), this protein is Large ribosomal subunit protein uL15.